A 270-amino-acid chain; its full sequence is Regulatory protein RecX (270 aa).

It belongs to the RecX family.

It is found in the cytoplasm. Functionally, modulates RecA activity. This is Regulatory protein RecX from Bacillus cytotoxicus (strain DSM 22905 / CIP 110041 / 391-98 / NVH 391-98).